Consider the following 197-residue polypeptide: MLERIKDSFTHSIQTKIDASEALPESIAKAAEMMVHCLLGGNKILACGNGGSAGDAQHFSAELLNRFEVERPPLPAIALTTDTSTITAIANDYSYDEIFSKQILALGQPGDILLAISTSGHSGNVIKAIEAALSRDMTIVALTGKDGGPMAGLLSINDVEIRVPSNSTARIQEVHLLAIHCLCDNIDRTLFPQDEQQ.

The 163-residue stretch at 34-196 (MVHCLLGGNK…DRTLFPQDEQ (163 aa)) folds into the SIS domain. 49–51 (NGG) contacts substrate. Residues His-58 and Glu-62 each contribute to the Zn(2+) site. Substrate is bound by residues Glu-62, 91 to 92 (ND), 117 to 119 (STS), Ser-122, and Gln-172. Gln-172 and His-180 together coordinate Zn(2+).

Belongs to the SIS family. GmhA subfamily. As to quaternary structure, homotetramer. The cofactor is Zn(2+).

The protein localises to the cytoplasm. The catalysed reaction is 2 D-sedoheptulose 7-phosphate = D-glycero-alpha-D-manno-heptose 7-phosphate + D-glycero-beta-D-manno-heptose 7-phosphate. Its pathway is carbohydrate biosynthesis; D-glycero-D-manno-heptose 7-phosphate biosynthesis; D-glycero-alpha-D-manno-heptose 7-phosphate and D-glycero-beta-D-manno-heptose 7-phosphate from sedoheptulose 7-phosphate: step 1/1. Functionally, catalyzes the isomerization of sedoheptulose 7-phosphate in D-glycero-D-manno-heptose 7-phosphate. The polypeptide is Phosphoheptose isomerase (Shewanella sediminis (strain HAW-EB3)).